Consider the following 345-residue polypeptide: S-adenosylmethionine:tRNA ribosyltransferase-isomerase (345 aa).

Belongs to the QueA family. Monomer.

Its subcellular location is the cytoplasm. It catalyses the reaction 7-aminomethyl-7-carbaguanosine(34) in tRNA + S-adenosyl-L-methionine = epoxyqueuosine(34) in tRNA + adenine + L-methionine + 2 H(+). It functions in the pathway tRNA modification; tRNA-queuosine biosynthesis. Transfers and isomerizes the ribose moiety from AdoMet to the 7-aminomethyl group of 7-deazaguanine (preQ1-tRNA) to give epoxyqueuosine (oQ-tRNA). This is S-adenosylmethionine:tRNA ribosyltransferase-isomerase from Acinetobacter baumannii (strain AB0057).